A 217-amino-acid chain; its full sequence is N-(5'-phosphoribosyl)anthranilate isomerase (217 aa).

This sequence belongs to the TrpF family.

The catalysed reaction is N-(5-phospho-beta-D-ribosyl)anthranilate = 1-(2-carboxyphenylamino)-1-deoxy-D-ribulose 5-phosphate. It functions in the pathway amino-acid biosynthesis; L-tryptophan biosynthesis; L-tryptophan from chorismate: step 3/5. The protein is N-(5'-phosphoribosyl)anthranilate isomerase of Chlorobium phaeobacteroides (strain BS1).